We begin with the raw amino-acid sequence, 413 residues long: Serine hydroxymethyltransferase (413 aa).

Residues Leu-119 and 123–125 (GHL) contribute to the (6S)-5,6,7,8-tetrahydrofolate site. Lys-228 carries the N6-(pyridoxal phosphate)lysine modification. Position 351-353 (351-353 (SPF)) interacts with (6S)-5,6,7,8-tetrahydrofolate.

This sequence belongs to the SHMT family. Homodimer. Pyridoxal 5'-phosphate is required as a cofactor.

The protein localises to the cytoplasm. It catalyses the reaction (6R)-5,10-methylene-5,6,7,8-tetrahydrofolate + glycine + H2O = (6S)-5,6,7,8-tetrahydrofolate + L-serine. The protein operates within one-carbon metabolism; tetrahydrofolate interconversion. It participates in amino-acid biosynthesis; glycine biosynthesis; glycine from L-serine: step 1/1. Functionally, catalyzes the reversible interconversion of serine and glycine with tetrahydrofolate (THF) serving as the one-carbon carrier. This reaction serves as the major source of one-carbon groups required for the biosynthesis of purines, thymidylate, methionine, and other important biomolecules. Also exhibits THF-independent aldolase activity toward beta-hydroxyamino acids, producing glycine and aldehydes, via a retro-aldol mechanism. This chain is Serine hydroxymethyltransferase, found in Lysinibacillus sphaericus (strain C3-41).